Reading from the N-terminus, the 1318-residue chain is Major tegument protein (1318 aa).

It belongs to the herpesviridae MTP family. As to quaternary structure, interacts with host DAXX; this interaction disrupts the chromatin remodeling complex ATRX:DAXX and thus allows viral transcription. Interacts with host SMC6; this interaction targets SMC5-SMC6 complex for proteasomal degradation.

Its subcellular location is the virion tegument. The protein localises to the host nucleus. Functionally, tegument protein that plays a role in the inhibition of host intrinsic defenses to promote viral early gene activation. Interacts with host DAXX and thereby disrupts the complex between DAXX and ATRX. Suppresses the DAXX-ATRX dependent deposition of histone H3.3 on viral chromatin allowing viral transcription. Targets also host SMC5/6 for proteasomal degradation in a CUL7 and calpain-dependent manner to support nuclear membrane-less replication compartment formation and lytic virus replication. The chain is Major tegument protein from Homo sapiens (Human).